We begin with the raw amino-acid sequence, 530 residues long: MNPIQPIPKSKIEIRIKCKDLTSKDLLSQSDPQAIVYLKQQQRNDWIQQGKTEKLKNQKSPEFKQSITVDYHFEEVQLLKIVVIDIDKDIKLLKDFDDHDLIGEVNVSLGSILSSPGGRMKMSLTKNGILSGSITISTEEIRETGANIYFALEGNHLDKKDLLSSDPYFKIYKSGGTLVYQSDVIKNTLNPTFPPVYLKLEELNGGDMFRELTFEFMDWDKIGDHDLIGRFTTNTDTILRGGALEFEIINPKKVGKSGYKNSGIIKFYIARIQGDPTFLDYLHGGLEINLMVAIDCTASNMPPDVSTSLHYNTPTQPSQYASSIAAVGNVLAPYDYDQMIEVVGFGGLYNGHTSHCFPFNLTNGDDNKSEAHGLQEVLDIYYNNVLKIPFSYPTNFENVIHHAIKRASKSTQSNQKYTVLLIITDGDISDTQKTIDELVSASKSALSVVIIGVGNYHFEAMKILDGDEKGLVDSKGNPSKRDICQFVPFNDFKNYPEALAHETLKEIPSQVLSFMKLSKIHPNQPRQFNC.

C2 domains lie at 1–122 and 130–248; these read MNPI…RMKM and LSGS…EFEI. Ca(2+) is bound by residues aspartate 25, aspartate 31, aspartate 85, aspartate 87, and aspartate 100. The 219-residue stretch at 289–507 folds into the VWFA domain; the sequence is NLMVAIDCTA…ALAHETLKEI (219 aa).

The protein belongs to the copine family. The cofactor is Ca(2+).

This Dictyostelium discoideum (Social amoeba) protein is Copine-D (cpnD).